The following is a 468-amino-acid chain: Putative amidase AmiC (468 aa).

Residues lysine 80 and serine 155 each act as charge relay system in the active site. Serine 179 (acyl-ester intermediate) is an active-site residue.

This sequence belongs to the amidase family.

It catalyses the reaction a monocarboxylic acid amide + H2O = a monocarboxylate + NH4(+). In Mycobacterium leprae (strain TN), this protein is Putative amidase AmiC (amiC).